A 785-amino-acid chain; its full sequence is Mitochondrial intermediate peptidase (785 aa).

The N-terminal 26 residues, Met-1 to Leu-26, are a transit peptide targeting the mitochondrion. The interval Leu-26–Asp-51 is disordered. His-566 lines the Zn(2+) pocket. The active site involves Glu-567. Residues His-570 and His-573 each coordinate Zn(2+).

This sequence belongs to the peptidase M3 family. Zn(2+) serves as cofactor.

It is found in the mitochondrion matrix. It catalyses the reaction Release of an N-terminal octapeptide as second stage of processing of some proteins imported into the mitochondrion.. Its function is as follows. Cleaves proteins, imported into the mitochondrion, to their mature size. While most mitochondrial precursor proteins are processed to the mature form in one step by mitochondrial processing peptidase (MPP), the sequential cleavage by MIP of an octapeptide after initial processing by MPP is a required step for a subgroup of nuclear-encoded precursor proteins destined for the matrix or the inner membrane. The polypeptide is Mitochondrial intermediate peptidase (oct1) (Botryotinia fuckeliana (strain B05.10) (Noble rot fungus)).